The chain runs to 265 residues: 3-methyl-2-oxobutanoate hydroxymethyltransferase (265 aa).

Positions 41 and 80 each coordinate Mg(2+). 3-methyl-2-oxobutanoate-binding positions include 41–42, Asp-80, and Lys-109; that span reads DS. Glu-111 contributes to the Mg(2+) binding site. Glu-178 serves as the catalytic Proton acceptor.

The protein belongs to the PanB family. As to quaternary structure, homodecamer; pentamer of dimers. Mg(2+) is required as a cofactor.

Its subcellular location is the cytoplasm. It carries out the reaction 3-methyl-2-oxobutanoate + (6R)-5,10-methylene-5,6,7,8-tetrahydrofolate + H2O = 2-dehydropantoate + (6S)-5,6,7,8-tetrahydrofolate. Its pathway is cofactor biosynthesis; (R)-pantothenate biosynthesis; (R)-pantoate from 3-methyl-2-oxobutanoate: step 1/2. Its function is as follows. Catalyzes the reversible reaction in which hydroxymethyl group from 5,10-methylenetetrahydrofolate is transferred onto alpha-ketoisovalerate to form ketopantoate. The sequence is that of 3-methyl-2-oxobutanoate hydroxymethyltransferase from Thermosipho africanus (strain TCF52B).